A 304-amino-acid chain; its full sequence is L-threonate dehydrogenase (304 aa).

NAD(+) contacts are provided by residues 7–35 and Thr102; that span reads YAVA…TYGV. The active site involves Lys178. Lys246 is a binding site for NAD(+).

It belongs to the HIBADH-related family. L-threonate dehydrogenase subfamily.

The catalysed reaction is L-threonate + NAD(+) = 2-dehydro-L-erythronate + NADH + H(+). Catalyzes oxidation of L-threonate to 2-oxo-tetronate. Can use either NAD(+) or NADP(+) as cosubstrate, with a preference for NAD(+). This Pectobacterium atrosepticum (strain SCRI 1043 / ATCC BAA-672) (Erwinia carotovora subsp. atroseptica) protein is L-threonate dehydrogenase.